Here is a 433-residue protein sequence, read N- to C-terminus: uncharacterized protein (433 aa).

Residues lysine 258 to threonine 304 adopt a coiled-coil conformation.

This sequence belongs to the mimivirus R160 family.

Its subcellular location is the virion. This is an uncharacterized protein from Acanthamoeba polyphaga mimivirus (APMV).